A 317-amino-acid chain; its full sequence is E3 ubiquitin-protein ligase NRDP1 (317 aa).

The segment at 18-57 adopts an RING-type; degenerate zinc-finger fold; the sequence is CPICSGVLEEPVQAPHCEHAFCNACITQWFSQQQTCPVDR. Residues 78–138 form an SIAH-type; degenerate zinc finger; that stretch reads KLQIACDNAV…LPNHNCIKHL (61 aa).

Interacts with USP8, ERBB3, PRKN and BIRC6. Interacts with CSF2RB, EPOR, IL3RA, MYD88 and TBK1. Interacts with Clec16a. In terms of processing, autoubiquitinated. Autoubiquitination leads to proteasomal degradation. Deubiquitinated by USP8 to get stabilized which induces apoptosis.

The catalysed reaction is S-ubiquitinyl-[E2 ubiquitin-conjugating enzyme]-L-cysteine + [acceptor protein]-L-lysine = [E2 ubiquitin-conjugating enzyme]-L-cysteine + N(6)-ubiquitinyl-[acceptor protein]-L-lysine.. It participates in protein modification; protein ubiquitination. Its function is as follows. Acts as E3 ubiquitin-protein ligase and regulates the degradation of target proteins. Polyubiquitinates MYD88. Negatively regulates MYD88-dependent production of pro-inflammatory cytokines. Can promote TRIF-dependent production of type I interferon and inhibits infection with vesicular stomatitis virus. Also promotes activation of TBK1 and IRF3. Involved in the ubiquitination of erythropoietin (EPO) and interleukin-3 (IL-3) receptors. Thus, through maintaining basal levels of cytokine receptors, RNF41 is involved in the control of hematopoietic progenitor cell differentiation into myeloerythroid lineages. Contributes to the maintenance of steady-state ERBB3 levels by mediating its growth factor-independent degradation. Involved in the degradation of the inhibitor of apoptosis BIRC6 and thus is an important regulator of cell death by promoting apoptosis. Also acts as a PRKN modifier that accelerates its degradation, resulting in a reduction of PRKN activity, influencing the balance of intracellular redox state. The RNF41-PRKN pathway regulates autophagosome-lysosome fusion during late mitophagy. Mitophagy is a selective form of autophagy necessary for mitochondrial quality control. This Mus musculus (Mouse) protein is E3 ubiquitin-protein ligase NRDP1 (Rnf41).